The primary structure comprises 243 residues: MSKTHFGFQSVDEQDKAQKVAGVFHSVAANYDLMNDLMSGGLHRAWKMFTIAQANVRPGYKVLDIAGGTGDLSKAFAKQAGETGEVWHTDINESMLRVGRDRLLDKGVITPALLCDAEKIPFPDNYFDVVTVAFGLRNMTHKDIALAEMRRVLKPAGRLLVLEFSKVWDPLKKVYDVYSFKVLPWLGEHFAKDAGSYQYLAESIRMHPDQETLKTMMEQAGLDGVKYYNLSAGVVALHVGTKY.

S-adenosyl-L-methionine-binding positions include T69, D90, and 116 to 117 (DA).

The protein belongs to the class I-like SAM-binding methyltransferase superfamily. MenG/UbiE family.

The catalysed reaction is a 2-demethylmenaquinol + S-adenosyl-L-methionine = a menaquinol + S-adenosyl-L-homocysteine + H(+). The enzyme catalyses a 2-methoxy-6-(all-trans-polyprenyl)benzene-1,4-diol + S-adenosyl-L-methionine = a 5-methoxy-2-methyl-3-(all-trans-polyprenyl)benzene-1,4-diol + S-adenosyl-L-homocysteine + H(+). It functions in the pathway quinol/quinone metabolism; menaquinone biosynthesis; menaquinol from 1,4-dihydroxy-2-naphthoate: step 2/2. It participates in cofactor biosynthesis; ubiquinone biosynthesis. In terms of biological role, methyltransferase required for the conversion of demethylmenaquinol (DMKH2) to menaquinol (MKH2) and the conversion of 2-polyprenyl-6-methoxy-1,4-benzoquinol (DDMQH2) to 2-polyprenyl-3-methyl-6-methoxy-1,4-benzoquinol (DMQH2). The sequence is that of Ubiquinone/menaquinone biosynthesis C-methyltransferase UbiE from Paraburkholderia xenovorans (strain LB400).